The primary structure comprises 88 residues: UPF0250 protein Sfri_0694 (88 aa).

It belongs to the UPF0250 family.

In Shewanella frigidimarina (strain NCIMB 400), this protein is UPF0250 protein Sfri_0694.